Reading from the N-terminus, the 285-residue chain is MSYEPATAATVAGLSVSGVKTMRVALYQCPPRPLDVAGNLQRLHQVAMEATDADLLVLPEMFLSGYNIGLEAVGALAEAQDGPSAQRIAAIAQAAGTAILYGYPERSVDGQIYNAVQLIDAQGQRLCNYRKTHLFGDLDHSMFSAGEDDFPLVELDGWKLGFLICYDIEFPENARRLALAGAELILVPTANMIPYDFVADVTIRARAFENQCYVAYANYCGHEEQIRYCGQSSIAAPDGSRIALAGLDEALIIGTLDRQLMGESRALNRYLSDRRPELYDDLSKR.

The CN hydrolase domain maps to 22–258 (MRVALYQCPP…EALIIGTLDR (237 aa)). Glu60 serves as the catalytic Proton acceptor. The active-site Proton donor is Lys131. The active-site Nucleophile is the Cys165.

The protein belongs to the carbon-nitrogen hydrolase superfamily. NIT1/NIT2 family.

The chain is Hydrolase in pqqF 5'region from Pseudomonas protegens (strain DSM 19095 / LMG 27888 / CFBP 6595 / CHA0).